Consider the following 363-residue polypeptide: UDP-N-acetylglucosamine--N-acetylmuramyl-(pentapeptide) pyrophosphoryl-undecaprenol N-acetylglucosamine transferase (363 aa).

UDP-N-acetyl-alpha-D-glucosamine is bound by residues 10 to 12 (TGG), Asn-124, Ser-195, Ile-248, and Gln-293.

This sequence belongs to the glycosyltransferase 28 family. MurG subfamily.

It localises to the cell membrane. It carries out the reaction Mur2Ac(oyl-L-Ala-gamma-D-Glu-L-Lys-D-Ala-D-Ala)-di-trans,octa-cis-undecaprenyl diphosphate + UDP-N-acetyl-alpha-D-glucosamine = beta-D-GlcNAc-(1-&gt;4)-Mur2Ac(oyl-L-Ala-gamma-D-Glu-L-Lys-D-Ala-D-Ala)-di-trans,octa-cis-undecaprenyl diphosphate + UDP + H(+). It participates in cell wall biogenesis; peptidoglycan biosynthesis. Functionally, cell wall formation. Catalyzes the transfer of a GlcNAc subunit on undecaprenyl-pyrophosphoryl-MurNAc-pentapeptide (lipid intermediate I) to form undecaprenyl-pyrophosphoryl-MurNAc-(pentapeptide)GlcNAc (lipid intermediate II). This chain is UDP-N-acetylglucosamine--N-acetylmuramyl-(pentapeptide) pyrophosphoryl-undecaprenol N-acetylglucosamine transferase, found in Lacticaseibacillus casei (strain BL23) (Lactobacillus casei).